Here is a 152-residue protein sequence, read N- to C-terminus: Succinate dehydrogenase [ubiquinone] cytochrome b small subunit B, mitochondrial (152 aa).

Residues 1 to 21 (MATLLRVSSLCRANRASAFKS) constitute a mitochondrion transit peptide. The Mitochondrial matrix segment spans residues 22 to 56 (LLIRPLPCLSQDLHMVQTSQIHTSPNHHAGSKAAS). Residues 57–78 (MHWTGERALSVALLGLLPAAYL) traverse the membrane as a helical segment. Residues 79–83 (YPGAA) lie on the Mitochondrial intermembrane side of the membrane. The chain crosses the membrane as a helical span at residues 84–104 (MDYSLAAALTLHGHWGLGQVV). A heme b-binding site is contributed by His95. At 105-113 (TDYVHGETK) the chain is on the mitochondrial matrix side. Tyr107 lines the a ubiquinone pocket. A helical transmembrane segment spans residues 114-135 (IKMANTSLFALSALTFAGLCYF). The Mitochondrial intermembrane segment spans residues 136–152 (NYHDVGICKAVAMLWSL).

This sequence belongs to the CybS family. In terms of assembly, component of complex II composed of four subunits: the flavoprotein (FP) SDHA, iron-sulfur protein (IP) SDHB, and a cytochrome b560 composed of SDHC and SDHD.

Its subcellular location is the mitochondrion inner membrane. The protein operates within carbohydrate metabolism; tricarboxylic acid cycle. Membrane-anchoring subunit of succinate dehydrogenase (SDH) that is involved in complex II of the mitochondrial electron transport chain and is responsible for transferring electrons from succinate to ubiquinone (coenzyme Q). SDH also oxidizes malate to the non-canonical enol form of oxaloacetate, enol-oxaloacetate. Enol-oxaloacetate, which is a potent inhibitor of the succinate dehydrogenase activity, is further isomerized into keto-oxaloacetate. This chain is Succinate dehydrogenase [ubiquinone] cytochrome b small subunit B, mitochondrial (sdhd-b), found in Xenopus laevis (African clawed frog).